The chain runs to 112 residues: MTTPQVKTGLFVGLNKGHVVTRRELAPRPRSRKGKTSKRTIFIRNLIKEVAGQAPYEKRITELLKVGKDKRALKVAKRKLGTHKRAKRKREEMSSVLRKMRSGGGGATEKKK.

Positions Lys79–Arg88 are enriched in basic residues. The tract at residues Lys79–Lys112 is disordered. Over residues Ser102 to Lys112 the composition is skewed to gly residues.

It belongs to the eukaryotic ribosomal protein eL36 family.

This chain is Large ribosomal subunit protein eL36y (RPL36B), found in Arabidopsis thaliana (Mouse-ear cress).